The following is a 261-amino-acid chain: MPLKVDLNADMGESFGAYKLGLDRELLNLVTSANIACGFHAGDYMVMQKTVNMAASKNVAVGAHPGFPDLQGFGRRNMQLSPEEVRNLVIYQIGALQPFARAEGTELKHVKPHGALYNMAAVNYELAKAIAEAVKKTVPDAILLALANSEMVKAANDVGIRVTQEVFADRAYNEDGTLVPRSMPGAVIDDPLQATERALEMVLEGKVTAINGKEIPIVAHSICVHGDNPKAVELASSIRKQLEKAHVEVVELTYVLKAAYS.

Belongs to the LamB/PxpA family. Forms a complex composed of PxpA, PxpB and PxpC.

It catalyses the reaction 5-oxo-L-proline + ATP + 2 H2O = L-glutamate + ADP + phosphate + H(+). Catalyzes the cleavage of 5-oxoproline to form L-glutamate coupled to the hydrolysis of ATP to ADP and inorganic phosphate. The protein is 5-oxoprolinase subunit A of Coprothermobacter proteolyticus (strain ATCC 35245 / DSM 5265 / OCM 4 / BT).